The sequence spans 224 residues: Orotidine 5'-phosphate decarboxylase (224 aa).

Residues D10, K32, 59 to 68, T115, R175, Q184, G204, and R205 each bind substrate; that span reads DLKLHDIPNT. K61 acts as the Proton donor in catalysis.

The protein belongs to the OMP decarboxylase family. Type 1 subfamily. In terms of assembly, homodimer.

The enzyme catalyses orotidine 5'-phosphate + H(+) = UMP + CO2. The protein operates within pyrimidine metabolism; UMP biosynthesis via de novo pathway; UMP from orotate: step 2/2. In terms of biological role, catalyzes the decarboxylation of orotidine 5'-monophosphate (OMP) to uridine 5'-monophosphate (UMP). This is Orotidine 5'-phosphate decarboxylase from Sphingopyxis alaskensis (strain DSM 13593 / LMG 18877 / RB2256) (Sphingomonas alaskensis).